The primary structure comprises 637 residues: Threonine--tRNA ligase (637 aa).

Residues 1-61 (MVTVTLPDGS…DADAQLAIVT (61 aa)) form the TGS domain. Residues 244-535 (DHRRLAKQLD…LIEHHAGNFP (292 aa)) form a catalytic region. Cys335, His386, and His512 together coordinate Zn(2+).

It belongs to the class-II aminoacyl-tRNA synthetase family. Homodimer. Zn(2+) is required as a cofactor.

It localises to the cytoplasm. It catalyses the reaction tRNA(Thr) + L-threonine + ATP = L-threonyl-tRNA(Thr) + AMP + diphosphate + H(+). In terms of biological role, catalyzes the attachment of threonine to tRNA(Thr) in a two-step reaction: L-threonine is first activated by ATP to form Thr-AMP and then transferred to the acceptor end of tRNA(Thr). Also edits incorrectly charged L-seryl-tRNA(Thr). This is Threonine--tRNA ligase from Thiobacillus denitrificans (strain ATCC 25259 / T1).